A 382-amino-acid polypeptide reads, in one-letter code: Dual-specificity RNA methyltransferase RlmN (382 aa).

E96 acts as the Proton acceptor in catalysis. Residues 102–342 (QGGRGTLCVS…VRTTRGEDID (241 aa)) enclose the Radical SAM core domain. C109 and C345 are disulfide-bonded. Residues C116, C120, and C123 each coordinate [4Fe-4S] cluster. Residues 170-171 (GE), S202, 224-226 (SLH), and N302 contribute to the S-adenosyl-L-methionine site. C345 serves as the catalytic S-methylcysteine intermediate.

Belongs to the radical SAM superfamily. RlmN family. [4Fe-4S] cluster is required as a cofactor.

Its subcellular location is the cytoplasm. The catalysed reaction is adenosine(2503) in 23S rRNA + 2 reduced [2Fe-2S]-[ferredoxin] + 2 S-adenosyl-L-methionine = 2-methyladenosine(2503) in 23S rRNA + 5'-deoxyadenosine + L-methionine + 2 oxidized [2Fe-2S]-[ferredoxin] + S-adenosyl-L-homocysteine. It catalyses the reaction adenosine(37) in tRNA + 2 reduced [2Fe-2S]-[ferredoxin] + 2 S-adenosyl-L-methionine = 2-methyladenosine(37) in tRNA + 5'-deoxyadenosine + L-methionine + 2 oxidized [2Fe-2S]-[ferredoxin] + S-adenosyl-L-homocysteine. In terms of biological role, specifically methylates position 2 of adenine 2503 in 23S rRNA and position 2 of adenine 37 in tRNAs. m2A2503 modification seems to play a crucial role in the proofreading step occurring at the peptidyl transferase center and thus would serve to optimize ribosomal fidelity. This is Dual-specificity RNA methyltransferase RlmN from Stutzerimonas stutzeri (strain A1501) (Pseudomonas stutzeri).